A 452-amino-acid chain; its full sequence is Bifunctional protein GlmU (452 aa).

Residues 1-232 form a pyrophosphorylase region; it reads MTTRTSLTIV…EDEVRGINTK (232 aa). UDP-N-acetyl-alpha-D-glucosamine contacts are provided by residues 11–14, lysine 25, glutamine 78, and 83–84; these read LAAG and GT. Aspartate 108 contacts Mg(2+). Positions 144, 158, 173, and 230 each coordinate UDP-N-acetyl-alpha-D-glucosamine. Residue asparagine 230 coordinates Mg(2+). The interval 233-253 is linker; the sequence is AQLAEAEAVMQTRLRQAAMTA. Positions 254 to 452 are N-acetyltransferase; the sequence is GVTLISPETI…SARARKPKTS (199 aa). Arginine 319 and lysine 337 together coordinate UDP-N-acetyl-alpha-D-glucosamine. Catalysis depends on histidine 349, which acts as the Proton acceptor. Tyrosine 352 and asparagine 363 together coordinate UDP-N-acetyl-alpha-D-glucosamine. Residues alanine 366, 372–373, serine 391, serine 409, and arginine 426 contribute to the acetyl-CoA site; that span reads NY.

In the N-terminal section; belongs to the N-acetylglucosamine-1-phosphate uridyltransferase family. The protein in the C-terminal section; belongs to the transferase hexapeptide repeat family. As to quaternary structure, homotrimer. Mg(2+) serves as cofactor.

It is found in the cytoplasm. It carries out the reaction alpha-D-glucosamine 1-phosphate + acetyl-CoA = N-acetyl-alpha-D-glucosamine 1-phosphate + CoA + H(+). The enzyme catalyses N-acetyl-alpha-D-glucosamine 1-phosphate + UTP + H(+) = UDP-N-acetyl-alpha-D-glucosamine + diphosphate. Its pathway is nucleotide-sugar biosynthesis; UDP-N-acetyl-alpha-D-glucosamine biosynthesis; N-acetyl-alpha-D-glucosamine 1-phosphate from alpha-D-glucosamine 6-phosphate (route II): step 2/2. It functions in the pathway nucleotide-sugar biosynthesis; UDP-N-acetyl-alpha-D-glucosamine biosynthesis; UDP-N-acetyl-alpha-D-glucosamine from N-acetyl-alpha-D-glucosamine 1-phosphate: step 1/1. It participates in bacterial outer membrane biogenesis; LPS lipid A biosynthesis. Functionally, catalyzes the last two sequential reactions in the de novo biosynthetic pathway for UDP-N-acetylglucosamine (UDP-GlcNAc). The C-terminal domain catalyzes the transfer of acetyl group from acetyl coenzyme A to glucosamine-1-phosphate (GlcN-1-P) to produce N-acetylglucosamine-1-phosphate (GlcNAc-1-P), which is converted into UDP-GlcNAc by the transfer of uridine 5-monophosphate (from uridine 5-triphosphate), a reaction catalyzed by the N-terminal domain. The chain is Bifunctional protein GlmU from Rhodopseudomonas palustris (strain BisB5).